Consider the following 119-residue polypeptide: MVKWAVSILVNALLLIVIDGYIDSIHISSIGAAIIASLILSILNVLIKPLLIIFTLPVTMVTLGLFLFVINAITLMMTASIMGDSFQIDGFGTAIWASVILSVFHLLIQKGILEPLRKK.

The N-terminal stretch at 1-23 (MVKWAVSILVNALLLIVIDGYID) is a signal peptide. 3 helical membrane passes run 27–47 (ISSIGAAIIASLILSILNVLI), 50–70 (LLIIFTLPVTMVTLGLFLFVI), and 88–108 (IDGFGTAIWASVILSVFHLLI).

It is found in the cell membrane. This is an uncharacterized protein from Bacillus subtilis (strain 168).